Here is a 465-residue protein sequence, read N- to C-terminus: CCA-adding enzyme (465 aa).

Residues Ser-63 and Lys-66 each contribute to the ATP site. Residues Ser-63 and Lys-66 each contribute to the CTP site. The Mg(2+) site is built by Glu-75, Asp-77, and Asp-127. 3 residues coordinate ATP: His-149, Lys-171, and Tyr-180. Residues His-149, Lys-171, and Tyr-180 each contribute to the CTP site.

Belongs to the tRNA nucleotidyltransferase/poly(A) polymerase family. Archaeal CCA-adding enzyme subfamily. Homodimer. Mg(2+) is required as a cofactor.

The enzyme catalyses a tRNA precursor + 2 CTP + ATP = a tRNA with a 3' CCA end + 3 diphosphate. The catalysed reaction is a tRNA with a 3' CCA end + 2 CTP + ATP = a tRNA with a 3' CCACCA end + 3 diphosphate. Its function is as follows. Catalyzes the addition and repair of the essential 3'-terminal CCA sequence in tRNAs without using a nucleic acid template. Adds these three nucleotides in the order of C, C, and A to the tRNA nucleotide-73, using CTP and ATP as substrates and producing inorganic pyrophosphate. tRNA 3'-terminal CCA addition is required both for tRNA processing and repair. Also involved in tRNA surveillance by mediating tandem CCA addition to generate a CCACCA at the 3' terminus of unstable tRNAs. While stable tRNAs receive only 3'-terminal CCA, unstable tRNAs are marked with CCACCA and rapidly degraded. The polypeptide is CCA-adding enzyme (Aeropyrum pernix (strain ATCC 700893 / DSM 11879 / JCM 9820 / NBRC 100138 / K1)).